A 221-amino-acid polypeptide reads, in one-letter code: Ribosomal RNA large subunit methyltransferase E (221 aa).

The S-adenosyl-L-methionine site is built by Gly-60, Trp-62, Asp-89, Asp-105, and Asp-134. Catalysis depends on Lys-174, which acts as the Proton acceptor. The tract at residues 199 to 221 is disordered; that stretch reads KPKASRDKSSETFLLGRQLKHPG.

It belongs to the class I-like SAM-binding methyltransferase superfamily. RNA methyltransferase RlmE family.

The protein resides in the cytoplasm. It carries out the reaction uridine(2552) in 23S rRNA + S-adenosyl-L-methionine = 2'-O-methyluridine(2552) in 23S rRNA + S-adenosyl-L-homocysteine + H(+). In terms of biological role, specifically methylates the uridine in position 2552 of 23S rRNA at the 2'-O position of the ribose in the fully assembled 50S ribosomal subunit. This Ralstonia nicotianae (strain ATCC BAA-1114 / GMI1000) (Ralstonia solanacearum) protein is Ribosomal RNA large subunit methyltransferase E.